Here is a 574-residue protein sequence, read N- to C-terminus: Alpha-mannosidase I MNS5 (574 aa).

At 1–9 (MSCPIHPRR) the chain is on the cytoplasmic side. A helical; Signal-anchor for type II membrane protein transmembrane segment spans residues 10-26 (LFLCLLISLTFFVVDPS). The Lumenal portion of the chain corresponds to 27–574 (SQHIEVKKKQ…VGYCGLWNPL (548 aa)). N-linked (GlcNAc...) asparagine glycans are attached at residues asparagine 89, asparagine 107, and asparagine 121. Catalysis depends on glutamate 134, which acts as the Proton donor. Asparagine 201 is a glycosylation site (N-linked (GlcNAc...) asparagine). Residue aspartate 274 is part of the active site. An N-linked (GlcNAc...) asparagine glycan is attached at asparagine 349. Glutamate 367 functions as the Proton donor in the catalytic mechanism. Glutamate 388 is a catalytic residue. Threonine 471 contributes to the Ca(2+) binding site. Asparagine 494 is a glycosylation site (N-linked (GlcNAc...) asparagine).

This sequence belongs to the glycosyl hydrolase 47 family. Ca(2+) is required as a cofactor.

The protein localises to the endoplasmic reticulum membrane. The protein operates within protein modification; protein glycosylation. Its function is as follows. Can convert Man(9)GlcNAc(2) and Man(8)GlcNAc(2) into N-glycans with a terminal alpha-1,6-linked Man residue in the C-branch. Functions in the formation of unique N-glycan structures that are specifically recognized by components of the endoplasmic reticulum-associated degradation (ERAD) machinery, which leads to the degradation of misfolded glycoproteins. Most likely generates N-glycan signal on misfolded glycoproteins that is subsequently recognized by OS9. Required for ERAD of the heavily glycosylated and misfolded BRI1 variants BRI1-5 and BRI1-9. Does not seem to play role in N-glycan processing of correctly folded proteins destined for secretion. This chain is Alpha-mannosidase I MNS5 (MNS5), found in Arabidopsis thaliana (Mouse-ear cress).